The primary structure comprises 126 residues: Holo-[acyl-carrier-protein] synthase (126 aa).

Mg(2+) contacts are provided by aspartate 8 and glutamate 59.

This sequence belongs to the P-Pant transferase superfamily. AcpS family. The cofactor is Mg(2+).

It is found in the cytoplasm. The enzyme catalyses apo-[ACP] + CoA = holo-[ACP] + adenosine 3',5'-bisphosphate + H(+). Functionally, transfers the 4'-phosphopantetheine moiety from coenzyme A to a Ser of acyl-carrier-protein. The protein is Holo-[acyl-carrier-protein] synthase of Rickettsia prowazekii (strain Madrid E).